Consider the following 176-residue polypeptide: COA8 family protein CG14806, mitochondrial (176 aa).

The transit peptide at 1 to 23 directs the protein to the mitochondrion; the sequence is MNKCFRCQPRISLFQFSLPRCYA.

Belongs to the COA8 family.

The protein localises to the mitochondrion inner membrane. Functionally, may be required for cytochrome c complex (COX) assembly and function, COX being the terminal component of the mitochondrial respiratory chain. (Microbial infection) Required for optimal replication of E.chaffeensis. This Drosophila melanogaster (Fruit fly) protein is COA8 family protein CG14806, mitochondrial.